A 441-amino-acid chain; its full sequence is MRGLEESGPRPTATPCGCVKPALETGNLLTEPVGYLESCFSAKNGTPRQPSICSYSRACLRIRKRIFNNPEHSLMGLEQFSHVWILFVFHKNGHLSCKAKVQPPRLNGAKTGVFSTRSPHRPNAIGLTLAKLEKVEGGAIYLSGIDMIHGTPVLDIKPYIAEYDSPQNVMEPLADFNLQNNQHTPNTVSQSDSKTDSCDQRQLSGCDEPQPHHSTKRKPKCPEDRTSEENYLTHSDTARIQQAFPMHREIAVDFGLESRRDQSSSVAEEQIGPYCPEKSFSEKGTDKKLERVEGAAVLQGSRAETQPMAPHCPAGRADGAPRSVVPAWVTEAPVATLEVRFTPHAEMDLGQLSSQDVGQASFKYFQSAEEAKRAIEAVLSADPRSVYRRKLCQDRLFYFTVDIAHVTCWFGDGFAEVLRIKPASEPVHMTGPVGSLVSLGS.

A TsaA-like domain is found at 30–168 (TEPVGYLESC…YIAEYDSPQN (139 aa)). Residues 47–49 (PRQ), 90–91 (HK), Arg-117, Leu-127, and 148–151 (IHGT) contribute to the S-adenosyl-L-methionine site. The segment covering 179–192 (QNNQHTPNTVSQSD) has biased composition (polar residues). Disordered regions lie at residues 179-231 (QNNQ…EENY) and 264-284 (SSVA…SEKG).

Belongs to the tRNA methyltransferase O family.

It carries out the reaction N(6)-L-threonylcarbamoyladenosine(37) in tRNA + S-adenosyl-L-methionine = N(6)-methyl,N(6)-L-threonylcarbamoyladenosine(37) in tRNA + S-adenosyl-L-homocysteine + H(+). Its function is as follows. S-adenosyl-L-methionine-dependent methyltransferase responsible for the addition of the methyl group in the formation of N6-methyl-N6-threonylcarbamoyladenosine at position 37 (m(6)t(6)A37) of the tRNA anticodon loop of tRNA(Ser)(GCU). The methyl group of m(6)t(6)A37 may improve the efficiency of the tRNA decoding ability. In Homo sapiens (Human), this protein is tRNA (adenine(37)-N6)-methyltransferase.